Reading from the N-terminus, the 82-residue chain is Small ribosomal subunit protein bS18 (82 aa).

This sequence belongs to the bacterial ribosomal protein bS18 family. As to quaternary structure, part of the 30S ribosomal subunit. Forms a tight heterodimer with protein bS6.

In terms of biological role, binds as a heterodimer with protein bS6 to the central domain of the 16S rRNA, where it helps stabilize the platform of the 30S subunit. The protein is Small ribosomal subunit protein bS18 of Rhizobium rhizogenes (strain K84 / ATCC BAA-868) (Agrobacterium radiobacter).